A 345-amino-acid chain; its full sequence is tRNA N6-adenosine threonylcarbamoyltransferase (345 aa).

The Fe cation site is built by His-113 and His-117. Substrate is bound by residues 142–146 (AISGG), Asp-175, Gly-188, Asp-192, and Asn-282. Fe cation is bound at residue Asp-310.

Belongs to the KAE1 / TsaD family. It depends on Fe(2+) as a cofactor.

Its subcellular location is the cytoplasm. It carries out the reaction L-threonylcarbamoyladenylate + adenosine(37) in tRNA = N(6)-L-threonylcarbamoyladenosine(37) in tRNA + AMP + H(+). In terms of biological role, required for the formation of a threonylcarbamoyl group on adenosine at position 37 (t(6)A37) in tRNAs that read codons beginning with adenine. Is involved in the transfer of the threonylcarbamoyl moiety of threonylcarbamoyl-AMP (TC-AMP) to the N6 group of A37, together with TsaE and TsaB. TsaD likely plays a direct catalytic role in this reaction. The chain is tRNA N6-adenosine threonylcarbamoyltransferase from Bdellovibrio bacteriovorus (strain ATCC 15356 / DSM 50701 / NCIMB 9529 / HD100).